The primary structure comprises 335 residues: DDRGK domain-containing protein 1 (335 aa).

The Lumenal segment spans residues 1–6 (MGDTYS). Residues 7–27 (LVLVAGYLSIFLFIGAIGYFY) traverse the membrane as a helical segment. The Cytoplasmic segment spans residues 28–335 (LSKPRIPSSN…NNDQDPVDTN (308 aa)). Residues 37 to 124 (NVNEQQQQQQ…GEDIGVVAPG (88 aa)) are disordered. Low complexity-rich tracts occupy residues 41–56 (QQQQQQQQQQQQQQPQ) and 91–103 (SSGSDSDNSTNSD). Acidic residues predominate over residues 104–117 (NYDDDNGQEGEGED).

This sequence belongs to the DDRGK1 family.

Its subcellular location is the endoplasmic reticulum membrane. Functionally, substrate adapter for ufmylation, the covalent attachment of the ubiquitin-like modifier UFM1 to substrate proteins. The chain is DDRGK domain-containing protein 1 from Dictyostelium discoideum (Social amoeba).